The following is a 300-amino-acid chain: Acetaldehyde dehydrogenase 3 (300 aa).

Residue 11–14 (SGNI) participates in NAD(+) binding. Cys-126 acts as the Acyl-thioester intermediate in catalysis. NAD(+)-binding positions include 157-165 (SAGPGTRAN) and Asn-276.

It belongs to the acetaldehyde dehydrogenase family.

The catalysed reaction is acetaldehyde + NAD(+) + CoA = acetyl-CoA + NADH + H(+). The protein is Acetaldehyde dehydrogenase 3 (hsaG) of Rhodococcus jostii (strain RHA1).